A 78-amino-acid chain; its full sequence is Small ribosomal subunit protein bS18 (78 aa).

The protein belongs to the bacterial ribosomal protein bS18 family. Part of the 30S ribosomal subunit. Forms a tight heterodimer with protein bS6.

In terms of biological role, binds as a heterodimer with protein bS6 to the central domain of the 16S rRNA, where it helps stabilize the platform of the 30S subunit. The polypeptide is Small ribosomal subunit protein bS18 (Parafrankia sp. (strain EAN1pec)).